The sequence spans 419 residues: Hyaluronan synthase (419 aa).

The next 5 membrane-spanning stretches (helical) occupy residues 8-28 (LIVLSFIFLISILIYLNMYLF), 33-53 (VGIYGVILITYLVIKLGLSFL), 318-338 (IVALWTIFEVVMFMMLIVAIG), 345-365 (AIQLDLIKLFAFLSIIFIVAL), and 376-396 (PASFLLSPLYGILHLFVLQPL).

This sequence belongs to the NodC/HAS family. It depends on Mg(2+) as a cofactor.

It is found in the cell membrane. It catalyses the reaction [hyaluronan](n) + UDP-N-acetyl-alpha-D-glucosamine = N-acetyl-beta-D-glucosaminyl-(1-&gt;4)-[hyaluronan](n) + UDP + H(+). The enzyme catalyses N-acetyl-beta-D-glucosaminyl-(1-&gt;4)-[hyaluronan](n) + UDP-alpha-D-glucuronate = [hyaluronan](n+1) + UDP + H(+). It participates in glycan biosynthesis; hyaluronan biosynthesis. In terms of biological role, glycosaminoglycan synthesis. The hyaluronic acid capsule is involved in the pathogenicity of group A Streptococci; it may be the major virulence determinant. The sequence is that of Hyaluronan synthase (hasA) from Streptococcus pyogenes serotype M6 (strain ATCC BAA-946 / MGAS10394).